The following is an 83-amino-acid chain: ATP synthase subunit c 2 (83 aa).

A run of 2 helical transmembrane segments spans residues 8 to 28 (IASILGAAFAVGIGSLGPALG) and 58 to 78 (LAMIETMAIYCLVIALLLLFA).

The protein belongs to the ATPase C chain family. F-type ATPases have 2 components, F(1) - the catalytic core - and F(0) - the membrane proton channel. F(1) has five subunits: alpha(3), beta(3), gamma(1), delta(1), epsilon(1). F(0) has four main subunits: a(1), b(1), b'(1) and c(10-14). The alpha and beta chains form an alternating ring which encloses part of the gamma chain. F(1) is attached to F(0) by a central stalk formed by the gamma and epsilon chains, while a peripheral stalk is formed by the delta, b and b' chains.

It localises to the cell inner membrane. In terms of biological role, f(1)F(0) ATP synthase produces ATP from ADP in the presence of a proton or sodium gradient. F-type ATPases consist of two structural domains, F(1) containing the extramembraneous catalytic core and F(0) containing the membrane proton channel, linked together by a central stalk and a peripheral stalk. During catalysis, ATP synthesis in the catalytic domain of F(1) is coupled via a rotary mechanism of the central stalk subunits to proton translocation. Its function is as follows. Key component of the F(0) channel; it plays a direct role in translocation across the membrane. A homomeric c-ring of between 10-14 subunits forms the central stalk rotor element with the F(1) delta and epsilon subunits. This is ATP synthase subunit c 2 from Cereibacter sphaeroides (strain ATCC 17029 / ATH 2.4.9) (Rhodobacter sphaeroides).